Reading from the N-terminus, the 511-residue chain is 2-isopropylmalate synthase (511 aa).

The 263-residue stretch at 5 to 267 (LIVFDTTLRD…DTRIDATQIV (263 aa)) folds into the Pyruvate carboxyltransferase domain. Mn(2+) is bound by residues D14, H202, H204, and N238. The regulatory domain stretch occupies residues 393–511 (RLVASRFHSE…SKLERLNPQL (119 aa)).

This sequence belongs to the alpha-IPM synthase/homocitrate synthase family. LeuA type 1 subfamily. In terms of assembly, homodimer. Requires Mn(2+) as cofactor.

The protein localises to the cytoplasm. The enzyme catalyses 3-methyl-2-oxobutanoate + acetyl-CoA + H2O = (2S)-2-isopropylmalate + CoA + H(+). It participates in amino-acid biosynthesis; L-leucine biosynthesis; L-leucine from 3-methyl-2-oxobutanoate: step 1/4. Its function is as follows. Catalyzes the condensation of the acetyl group of acetyl-CoA with 3-methyl-2-oxobutanoate (2-ketoisovalerate) to form 3-carboxy-3-hydroxy-4-methylpentanoate (2-isopropylmalate). The polypeptide is 2-isopropylmalate synthase (Aromatoleum aromaticum (strain DSM 19018 / LMG 30748 / EbN1) (Azoarcus sp. (strain EbN1))).